The primary structure comprises 796 residues: RNA cytosine-C(5)-methyltransferase NSUN2 (796 aa).

Positions 1–11 (MGRRARDRRRQ) are enriched in basic residues. A disordered region spans residues 1 to 36 (MGRRARDRRRQLQPQQRRERSGGGGGGGDDQAGWAG). The span at 22–36 (GGGGGGGDDQAGWAG) shows a compositional bias: gly residues. S-adenosyl-L-methionine is bound by residues 184–190 (CAAPGSK), D215, D242, and D268. C321 (nucleophile) is an active-site residue. 2 disordered regions span residues 435–501 (WNKR…CGPP) and 707–796 (RKEG…NVKD). 3 stretches are compositionally biased toward basic and acidic residues: residues 467–483 (ATEKPTLAEDEEPKKVQ), 708–721 (KEGESEGKTEEEVQ), and 733–746 (VEDKERDAVTKMEA). The span at 774–783 (CSKNTNSHIN) shows a compositional bias: polar residues. The segment covering 784 to 796 (QESKDMNTNNVKD) has biased composition (basic and acidic residues).

The protein belongs to the class I-like SAM-binding methyltransferase superfamily. RsmB/NOP family. TRM4 subfamily.

Its subcellular location is the nucleus. The protein resides in the nucleolus. It localises to the cytoplasm. It is found in the mitochondrion. The protein localises to the cytoskeleton. Its subcellular location is the spindle. The protein resides in the secreted. It localises to the extracellular exosome. The catalysed reaction is cytidine(48) in tRNA + S-adenosyl-L-methionine = 5-methylcytidine(48) in tRNA + S-adenosyl-L-homocysteine + H(+). It carries out the reaction cytidine(49) in tRNA + S-adenosyl-L-methionine = 5-methylcytidine(49) in tRNA + S-adenosyl-L-homocysteine + H(+). The enzyme catalyses cytidine(50) in tRNA + S-adenosyl-L-methionine = 5-methylcytidine(50) in tRNA + S-adenosyl-L-homocysteine + H(+). It catalyses the reaction cytidine(34) in tRNA precursor + S-adenosyl-L-methionine = 5-methylcytidine(34) in tRNA precursor + S-adenosyl-L-homocysteine + H(+). The catalysed reaction is a cytidine in mRNA + S-adenosyl-L-methionine = a 5-methylcytidine in mRNA + S-adenosyl-L-homocysteine + H(+). RNA cytosine C(5)-methyltransferase that methylates cytosine to 5-methylcytosine (m5C) in various RNAs, such as tRNAs, mRNAs and some long non-coding RNAs (lncRNAs). Involved in various processes, such as epidermal stem cell differentiation, testis differentiation and maternal to zygotic transition during early development: acts by increasing protein synthesis; cytosine C(5)-methylation promoting tRNA stability and preventing mRNA decay. Methylates cytosine to 5-methylcytosine (m5C) at positions 34 and 48 of intron-containing tRNA(Leu)(CAA) precursors, and at positions 48, 49 and 50 of tRNA(Gly)(GCC) precursors. tRNA methylation is required generation of RNA fragments derived from tRNAs (tRFs). Also mediates C(5)-methylation of mitochondrial tRNAs. Catalyzes cytosine C(5)-methylation of mRNAs, leading to stabilize them and prevent mRNA decay. Cytosine C(5)-methylation of mRNAs also regulates mRNA export. Also mediates cytosine C(5)-methylation of non-coding RNAs, such as vault RNAs (vtRNAs), promoting their processing into regulatory small RNAs. Required for proper spindle assembly and chromosome segregation, independently of its methyltransferase activity. The chain is RNA cytosine-C(5)-methyltransferase NSUN2 from Gallus gallus (Chicken).